Consider the following 332-residue polypeptide: MVRVAINGFGRIGRIVLRIAMKRDGIDVVAINDPFITNDYAAYMFKYDSTHGRYDGEVTHDDKDLIIDGKAIKCYQERDPADLPWGDNDIDIVIEATGVFTAKDLAEKHITAGAKKVVITGPSATAPMFVKGVNDDKYTSDVTVISNASCTTNCLAPLAKVLQDNFGIEEALMSTVHSQTATQKTVDGPSKKDWRGGRTASANIIPSSTGAAKAVTKVLPELEGKLTGMAFRVPTVDVSVVDLTVRFAKDVTYDEIKAAIKKASEGEMKGILAYTEDAVVSTDFLGDTHSSIFDASAGIQLSPRFVKLVSWYDNEYGFSARVVDMVELVSKA.

NAD(+)-binding positions include 11 to 12, D33, and R78; that span reads RI. D-glyceraldehyde 3-phosphate contacts are provided by residues 149–151, T180, 209–210, and R232; these read SCT and TG. The Nucleophile role is filled by C150. N314 contributes to the NAD(+) binding site.

This sequence belongs to the glyceraldehyde-3-phosphate dehydrogenase family. Homotetramer.

It is found in the cytoplasm. The enzyme catalyses D-glyceraldehyde 3-phosphate + phosphate + NAD(+) = (2R)-3-phospho-glyceroyl phosphate + NADH + H(+). It participates in carbohydrate degradation; glycolysis; pyruvate from D-glyceraldehyde 3-phosphate: step 1/5. This chain is Glyceraldehyde-3-phosphate dehydrogenase 1 (GPD1), found in Candida glabrata (strain ATCC 2001 / BCRC 20586 / JCM 3761 / NBRC 0622 / NRRL Y-65 / CBS 138) (Yeast).